Here is a 237-residue protein sequence, read N- to C-terminus: Class B acid phosphatase (237 aa).

The first 23 residues, 1-23, serve as a signal peptide directing secretion; sequence MKKITLALSAVCLLFTLNHSANA. The active-site Nucleophile is Asp-69. Asp-69 and Asp-71 together coordinate Mg(2+). Asp-71 (proton donor) is an active-site residue. Substrate is bound by residues 137–138 and Lys-177; that span reads TG. A Mg(2+)-binding site is contributed by Asp-192.

Belongs to the class B bacterial acid phosphatase family. In terms of assembly, homotetramer. Mg(2+) serves as cofactor.

It localises to the periplasm. The catalysed reaction is a phosphate monoester + H2O = an alcohol + phosphate. Its function is as follows. Dephosphorylates several organic phosphate monoesters. Also has a phosphotransferase activity catalyzing the transfer of low-energy phosphate groups from organic phosphate monoesters to free hydroxyl groups of various organic compounds. This Salmonella arizonae (strain ATCC BAA-731 / CDC346-86 / RSK2980) protein is Class B acid phosphatase.